The sequence spans 704 residues: Mannan-binding lectin serine protease 1 (704 aa).

An N-terminal signal peptide occupies residues 1–24 (MRFLSFRRLLLYHVLCLTLTEVSA). Residues 25–143 (HTVELNEMFG…TGFDAHYMAV (119 aa)) form the CUB 1 domain. The homodimerization stretch occupies residues 25 to 189 (HTVELNEMFG…HTDNRTCRVE (165 aa)). An interaction with MBL2 region spans residues 25–189 (HTVELNEMFG…HTDNRTCRVE (165 aa)). Residues 25 to 283 (HTVELNEMFG…STQSHSIQIL (259 aa)) form an interaction with FCN2 region. An interaction with MBL1 region spans residues 25–305 (HTVELNEMFG…RLSYRAAGNE (281 aa)). A glycan (N-linked (GlcNAc...) asparagine) is linked at N54. Ca(2+)-binding residues include E73, D81, D126, S128, D144, V145, and E147. C78 and C96 are disulfide-bonded. Residues 144–187 (DVDECKEREDEELSCDHYCHNYIGGYYCSCRFGYILHTDNRTCR) enclose the EGF-like; calcium-binding domain. Cystine bridges form between C148–C162, C158–C171, C173–C186, and C190–C217. Ca(2+)-binding residues include N164, Y165, and G168. A (3R)-3-hydroxyasparagine modification is found at N164. N-linked (GlcNAc...) asparagine glycosylation is present at N183. Residues 190–302 (CSGNLFTQRT…RGWRLSYRAA (113 aa)) form the CUB 2 domain. 4 residues coordinate Ca(2+): E240, D250, D287, and S289. An intrachain disulfide couples C247 to C265. Sushi domains lie at 304–369 (NECP…TCKI) and 370–439 (VDCG…TCLP). Cystine bridges form between C306–C354, C334–C367, C372–C419, C402–C437, C441–C577, and C480–C496. N-linked (GlcNAc...) asparagine glycans are attached at residues N390 and N412. The Peptidase S1 domain maps to 454-701 (IFNGRPAQKG…NKDWIQRVTG (248 aa)). The Charge relay system role is filled by H495. An N-linked (GlcNAc...) asparagine glycan is attached at L538. The active-site Charge relay system is D557. An N-linked (GlcNAc...) asparagine glycan is attached at E604. 2 disulfide bridges follow: C619-C636 and C647-C677. Catalysis depends on S651, which acts as the Charge relay system.

This sequence belongs to the peptidase S1 family. In terms of assembly, homodimer. Interacts with the oligomeric lectins MBL2, FCN2 and FCN3; triggers the lectin pathway of complement through activation of C3. Interacts with SERPING1. Interacts with COLEC11; probably triggers the lectin pathway of complement. In terms of processing, the iron and 2-oxoglutarate dependent 3-hydroxylation of aspartate and asparagine is (R) stereospecific within EGF domains. N-glycosylated. Some N-linked glycan are of the complex-type. Post-translationally, autoproteolytic processing of the proenzyme produces the active enzyme composed on the heavy and the light chain held together by a disulfide bond. Isoform 1 but not isoform 2 is activated through autoproteolytic processing. Protein of the plasma which is primarily expressed by liver.

It localises to the secreted. Inhibited by SERPING1 and A2M. Its function is as follows. Functions in the lectin pathway of complement, which performs a key role in innate immunity by recognizing pathogens through patterns of sugar moieties and neutralizing them. The lectin pathway is triggered upon binding of mannan-binding lectin (MBL) and ficolins to sugar moieties which leads to activation of the associated proteases MASP1 and MASP2. Functions as an endopeptidase and may activate MASP2 or C2 or directly activate C3 the key component of complement reaction. Isoform 2 may have an inhibitory effect on the activation of the lectin pathway of complement or may cleave IGFBP5. Also plays a role in development. This Rattus norvegicus (Rat) protein is Mannan-binding lectin serine protease 1 (Masp1).